The primary structure comprises 489 residues: EGF-like domain-containing protein 2 (489 aa).

An N-terminal signal peptide occupies residues 1–23; it reads MMQTLLRGLCVVVLFWGYIKASA. The region spanning 73-109 is the EGF-like domain; sequence PATLCDPPCLNGGQCFEPTADTYMCMCSEAFYGSQCE. Cystine bridges form between Cys-77–Cys-87, Cys-81–Cys-97, and Cys-99–Cys-108. Residues 116–370 enclose the ZP domain; it reads ECSGDQITIN…GSCPTPAPPA (255 aa). Asn-229 is a glycosylation site (N-linked (GlcNAc...) asparagine). Disordered stretches follow at residues 358–389 and 404–425; these read CEPGSCPTPAPPAPVQPTPSENPGRKRRAASD and RSNEKLRLPHNKSDKKSQQNAD. Over residues 363–374 the composition is skewed to pro residues; sequence CPTPAPPAPVQP. The segment covering 404–420 has biased composition (basic and acidic residues); sequence RSNEKLRLPHNKSDKKS. N-linked (GlcNAc...) asparagine glycans are attached at residues Asn-414 and Asn-479.

As to expression, component of the acid-insoluble organic matrix of calcified layers of the shell (at protein level).

Its subcellular location is the secreted. The protein is EGF-like domain-containing protein 2 of Lottia gigantea (Giant owl limpet).